The sequence spans 347 residues: GMP reductase (347 aa).

Position 108–131 (108–131) interacts with NADP(+); sequence ADFAKTAQILALNPALNFVCIDVA. K(+)-binding residues include G181 and G183. C186 serves as the catalytic Thioimidate intermediate. 216–239 contributes to the NADP(+) binding site; that stretch reads IVSDGGCTMPGDVAKAFGGGADFV.

The protein belongs to the IMPDH/GMPR family. GuaC type 1 subfamily. As to quaternary structure, homotetramer.

It catalyses the reaction IMP + NH4(+) + NADP(+) = GMP + NADPH + 2 H(+). In terms of biological role, catalyzes the irreversible NADPH-dependent deamination of GMP to IMP. It functions in the conversion of nucleobase, nucleoside and nucleotide derivatives of G to A nucleotides, and in maintaining the intracellular balance of A and G nucleotides. The chain is GMP reductase from Salmonella arizonae (strain ATCC BAA-731 / CDC346-86 / RSK2980).